The primary structure comprises 138 residues: Large ribosomal subunit protein bL19 (138 aa).

The protein belongs to the bacterial ribosomal protein bL19 family.

In terms of biological role, this protein is located at the 30S-50S ribosomal subunit interface and may play a role in the structure and function of the aminoacyl-tRNA binding site. In Rickettsia canadensis (strain McKiel), this protein is Large ribosomal subunit protein bL19.